The primary structure comprises 562 residues: Tetratricopeptide repeat protein 39A (562 aa).

TPR repeat units lie at residues A273–W306, C463–I496, and P504–Y537.

Belongs to the TTC39 family.

The polypeptide is Tetratricopeptide repeat protein 39A (ttc39a) (Xenopus tropicalis (Western clawed frog)).